Consider the following 381-residue polypeptide: Chaperone protein DnaJ (381 aa).

The J domain maps to 5-70; it reads DYYEVLGCDR…QKRGAYDRYG (66 aa). The segment at 136–214 adopts a CR-type zinc-finger fold; it reads GKTAQISIPT…CGGAGRVTRE (79 aa). 8 residues coordinate Zn(2+): cysteine 149, cysteine 152, cysteine 166, cysteine 169, cysteine 188, cysteine 191, cysteine 202, and cysteine 205. CXXCXGXG motif repeat units follow at residues 149-156, 166-173, 188-195, and 202-209; these read CEVCSGSG, CRTCNGAG, CPSCQGRG, and CPNCGGAG.

Belongs to the DnaJ family. As to quaternary structure, homodimer. Zn(2+) is required as a cofactor.

Its subcellular location is the cytoplasm. Participates actively in the response to hyperosmotic and heat shock by preventing the aggregation of stress-denatured proteins and by disaggregating proteins, also in an autonomous, DnaK-independent fashion. Unfolded proteins bind initially to DnaJ; upon interaction with the DnaJ-bound protein, DnaK hydrolyzes its bound ATP, resulting in the formation of a stable complex. GrpE releases ADP from DnaK; ATP binding to DnaK triggers the release of the substrate protein, thus completing the reaction cycle. Several rounds of ATP-dependent interactions between DnaJ, DnaK and GrpE are required for fully efficient folding. Also involved, together with DnaK and GrpE, in the DNA replication of plasmids through activation of initiation proteins. This is Chaperone protein DnaJ from Azorhizobium caulinodans (strain ATCC 43989 / DSM 5975 / JCM 20966 / LMG 6465 / NBRC 14845 / NCIMB 13405 / ORS 571).